Consider the following 129-residue polypeptide: Protein Turandot A1/2 (129 aa).

The N-terminal stretch at 1 to 21 (MNSSTALMCFALLLISPLCLG) is a signal peptide. The N-linked (GlcNAc...) asparagine glycan is linked to asparagine 49.

It belongs to the Turandot family.

The protein localises to the secreted. A humoral factor that plays a role in stress tolerance; gives increased resistance to the lethal effects of bacterial challenge and stress. Regulated by the JAK/STAT pathway and NF-KB-like Relish pathway in the fat body, upd3 in the hemocytes and Mekk1 in response to septic injury and consequent immune response. The chain is Protein Turandot A1/2 (TotA1) from Drosophila sechellia (Fruit fly).